Consider the following 277-residue polypeptide: MQYQAPGAAPAAALGVGVPLYAPTPLLQPAHPTPFYIEDILGRGPAAAPAPHSLPAPPPPTLPSPNSSFTSLVAPYRTPVYEPTPIHPAFSHHLAATYGTGAYAGPLYSFPRAVGDYTHALIRQDPLGKPLLWSPFIQRPLHKRKGGQVRFSNEQTIELEKKFETQKYLSPPERKRLAKLLQLSERQVKTWFQNRRAKWRRLKQENPQATKKEEAEGTGDHGDPRSEGSPSPAGGGEAEPQDSPSAASQEDPESDVSDDSDQEVDIEGDKGFYSATR.

Disordered regions lie at residues 47–69 and 199–277; these read AAPAPHSLPAPPPPTLPSPNSSF and WRRL…SATR. A compositionally biased stretch (pro residues) spans 52 to 63; sequence HSLPAPPPPTLP. The homeobox DNA-binding region spans 144 to 203; that stretch reads RKGGQVRFSNEQTIELEKKFETQKYLSPPERKRLAKLLQLSERQVKTWFQNRRAKWRRLK. Residues 210–226 are compositionally biased toward basic and acidic residues; the sequence is TKKEEAEGTGDHGDPRS. The segment covering 250 to 266 has biased composition (acidic residues); sequence EDPESDVSDDSDQEVDI.

In all hematopoietic tissues except peripheral blood erythrocytes and in the liver and lung.

It localises to the nucleus. In terms of biological role, recognizes the DNA sequence 5'-ATTAA-3'. Transcriptional repressor. May play a role in hematopoietic differentiation. The polypeptide is Hematopoietically-expressed homeobox protein HHEX (HHEX) (Gallus gallus (Chicken)).